Here is a 599-residue protein sequence, read N- to C-terminus: Ecdysone oxidase (599 aa).

FAD contacts are provided by residues asparagine 137–valine 140 and tryptophan 537–histidine 538. The Proton acceptor role is filled by histidine 538.

It belongs to the GMC oxidoreductase family. FAD serves as cofactor.

The catalysed reaction is ecdysone + O2 = 3-dehydroecdysone + H2O2. Involved in the inactivation of ecdysteroid molting hormones by converting ecdysteroids into 3-dehydroecdysteroids. This is Ecdysone oxidase from Spodoptera littoralis (Egyptian cotton leafworm).